We begin with the raw amino-acid sequence, 217 residues long: Large ribosomal subunit protein uL1 (217 aa).

Belongs to the universal ribosomal protein uL1 family. In terms of assembly, part of the 50S ribosomal subunit.

Functionally, binds directly to 23S rRNA. Probably involved in E site tRNA release. In terms of biological role, protein L1 is also a translational repressor protein, it controls the translation of its operon by binding to its mRNA. This is Large ribosomal subunit protein uL1 from Aeropyrum pernix (strain ATCC 700893 / DSM 11879 / JCM 9820 / NBRC 100138 / K1).